We begin with the raw amino-acid sequence, 351 residues long: CCN family member 3 (351 aa).

The signal sequence occupies residues 1-21; sequence MSVFLRKQCLCLGFLLLHLLN. Residues 25–99 form the IGFBP N-terminal domain; it reads ATLRCPSRCP…NNETGICMVP (75 aa). Disulfide bonds link Cys-29-Cys-55, Cys-33-Cys-57, Cys-37-Cys-58, Cys-44-Cys-61, Cys-69-Cys-83, and Cys-75-Cys-96. Residue Asn-91 is glycosylated (N-linked (GlcNAc...) asparagine). Residues 102 to 168 enclose the VWFC domain; sequence DNCVFDGVIY…GECCEKWTCG (67 aa). A TSP type-1 domain is found at 199 to 244; that stretch reads NCIEQTTEWSACSKSCGMGLSTRVTNRNLQCEMVKQTRLCMVRPCE. Residue Cys-238 is the site of S-palmitoyl cysteine attachment. 5 disulfide bridges follow: Cys-258-Cys-295, Cys-275-Cys-309, Cys-286-Cys-325, Cys-289-Cys-327, and Cys-294-Cys-331. The region spanning 258 to 332 is the CTCK domain; it reads CLRTKKSLKS…GTCTCHSNCP (75 aa). An N-linked (GlcNAc...) asparagine glycan is attached at Asn-274.

The protein belongs to the CCN family. In terms of assembly, interacts with FBLN1. Interacts (via CTCK domain) with NOTCH1 (via the EGF-like repeat region). Interacts with GJA1/CX43. Interacts with ITGA5:ITGB1, ITGAV:ITGB3 and ITGAV:ITGB5. Interacts with ZDHHC22; the interaction may lead to CCN3 palmitoylation. May be palmitoylated on Cys-238, which is important for extracellular secretion. Widely expressed. Highly expressed in neurons of dorsal root ganglia and dorsal horn of the spinal cord (at protein level). Expressed in astrocytes (at protein level). In cartilage, dominantly expressed in the chondrocyte territorial matrix.

The protein resides in the secreted. It localises to the cytoplasm. The protein localises to the cell junction. Its subcellular location is the gap junction. In terms of biological role, immediate-early protein playing a role in various cellular processes including proliferation, adhesion, migration, differentiation and survival. Acts by binding to integrins or membrane receptors such as NOTCH1. Essential regulator of hematopoietic stem and progenitor cell function. Inhibits myogenic differentiation through the activation of Notch-signaling pathway. Inhibits vascular smooth muscle cells proliferation by increasing expression of cell-cycle regulators such as CDKN2B or CDKN1A independently of TGFB1 signaling. Ligand of integrins ITGAV:ITGB3 and ITGA5:ITGB1, acts directly upon endothelial cells to stimulate pro-angiogenic activities and induces angiogenesis. In endothelial cells, supports cell adhesion, induces directed cell migration (chemotaxis) and promotes cell survival. Also plays a role in cutaneous wound healing acting as integrin receptor ligand. Supports skin fibroblast adhesion through ITGA5:ITGB1 and ITGA6:ITGB1 and induces fibroblast chemotaxis through ITGAV:ITGB5. Seems to enhance bFGF-induced DNA synthesis in fibroblasts. Involved in bone regeneration as a negative regulator. Enhances the articular chondrocytic phenotype, whereas it repressed the one representing endochondral ossification. Impairs pancreatic beta-cell function, inhibits beta-cell proliferation and insulin secretion. Plays a role as negative regulator of endothelial pro-inflammatory activation reducing monocyte adhesion, its anti-inflammatory effects occur secondary to the inhibition of NF-kappaB signaling pathway. Contributes to the control and coordination of inflammatory processes in atherosclerosis. Attenuates inflammatory pain through regulation of IL1B- and TNF-induced MMP9, MMP2 and CCL2 expression. Inhibits MMP9 expression through ITGB1 engagement. Brain osteoanabolic hormone. During lactation, maintains the maternal skeleton and viability of offspring. This Rattus norvegicus (Rat) protein is CCN family member 3 (Ccn3).